A 164-amino-acid chain; its full sequence is CB1 cannabinoid receptor-interacting protein 1 (164 aa).

The protein belongs to the CNRIP family. In terms of assembly, interacts with the cannabinoid receptor CNR1 (via C-terminus). Does not interact with cannabinoid receptor CNR2. As to expression, highly expressed in brain. Also detected in heart, lung, intestine, kidney, testis, spleen, liver and muscle (at protein level).

In terms of biological role, suppresses cannabinoid receptor CNR1-mediated tonic inhibition of voltage-gated calcium channels. The sequence is that of CB1 cannabinoid receptor-interacting protein 1 (Cnrip1) from Mus musculus (Mouse).